The primary structure comprises 247 residues: Serine protease 1 (247 aa).

An N-terminal signal peptide occupies residues 1 to 15 (MNPLLILTFVAAALA). Residues 16-23 (APFDDDDK) constitute a propeptide, activation peptide. The region spanning 24–244 (IVGGYNCEEN…YVKWIKNTIA (221 aa)) is the Peptidase S1 domain. Cystine bridges form between Cys30-Cys160, Cys48-Cys64, Cys139-Cys206, Cys171-Cys185, and Cys196-Cys220. The active-site Charge relay system is His63. Residues Glu75, Asn77, Val80, and Glu85 each coordinate Ca(2+). Catalysis depends on Asp107, which acts as the Charge relay system. Tyr154 is subject to Sulfotyrosine. Ser200 serves as the catalytic Charge relay system.

Belongs to the peptidase S1 family. In terms of assembly, interacts with SERPINA1. Requires Ca(2+) as cofactor. In terms of processing, occurs in a single-chain form and a two-chain form, produced by proteolytic cleavage after Arg-122. Sulfation at Tyr-154 increases selectivity towards basic versus apolar residues at the P2' position of inhibitors that bind in a substrate-like fashion. Although the increase in selectivity is relatively small, it may facilitate digestion of a broader range of dietary proteins.

It localises to the secreted. It is found in the extracellular space. It catalyses the reaction Preferential cleavage: Arg-|-Xaa, Lys-|-Xaa.. Has activity against the synthetic substrates Boc-Phe-Ser-Arg-Mec, Boc-Leu-Thr-Arg-Mec, Boc-Gln-Ala-Arg-Mec and Boc-Val-Pro-Arg-Mec. The single-chain form is more active than the two-chain form against all of these substrates. This Homo sapiens (Human) protein is Serine protease 1.